Reading from the N-terminus, the 393-residue chain is Purine permease 14 (393 aa).

Ala-2 carries the post-translational modification N-acetylalanine. 10 consecutive transmembrane segments (helical) span residues 46–66 (WPTI…AKLL), 90–110 (TQSL…LIFI), 133–153 (LAVI…LAAM), 161–181 (GVFT…AAFI), 189–209 (WVVI…SSSF), 225–245 (WAAL…QNVF), 268–288 (VIIF…LIAG), 308–328 (VMAM…IVGL), 339–359 (VISV…FNFM), and 363–383 (FDAF…AYFF).

It belongs to the purine permeases (TC 2.A.7.14) family. As to expression, expressed in seedlings, leaves, embryos, ovules, seeds and the root and shoot meristems. In heart-stage embryos, detected in cells that failed to respond to cytokinins, including the prospective cotyledons.

The protein localises to the cell membrane. Functionally, purine permease implicated in ATP-dependent cytokinin translocation that controls the spatiotemporal landscape of cytokinin signaling. Depletes ligands from the apoplast, which leads to a suppression of the cytokinin response. In Arabidopsis thaliana (Mouse-ear cress), this protein is Purine permease 14.